The primary structure comprises 443 residues: Xaa-Pro dipeptidase (443 aa).

Asp246, Asp257, His339, Glu384, and Glu423 together coordinate Mn(2+).

This sequence belongs to the peptidase M24B family. Bacterial-type prolidase subfamily. Mn(2+) is required as a cofactor.

It catalyses the reaction Xaa-L-Pro dipeptide + H2O = an L-alpha-amino acid + L-proline. In terms of biological role, splits dipeptides with a prolyl residue in the C-terminal position. The protein is Xaa-Pro dipeptidase of Shigella flexneri.